Reading from the N-terminus, the 524-residue chain is Nucleobase-ascorbate transporter 2 (524 aa).

The next 12 helical transmembrane spans lie at 41–61 (YILA…MMGG), 69–89 (VVQT…LFGT), 91–111 (LPTV…IIHD), 133–153 (GAII…MWAI), 155–175 (SRFF…FGLF), 179–199 (FPVV…FVIF), 217–237 (FALI…TASG), 282–302 (AFAM…AFKA), 359–379 (RVIQ…KFGA), 380–400 (LFAS…FGLV), 419–439 (LFIV…FRDF), and 457–477 (DFLN…AVFL).

This sequence belongs to the nucleobase:cation symporter-2 (NCS2) (TC 2.A.40) family. As to expression, expressed in cotyledons 10 days after imbibition (DAI). Expressed in the minor and major veins of cotyledons and leaves, in the shoot apex and pedicels. Expressed in the root meristems, root tips and lateral root primordia.

Its subcellular location is the membrane. In Arabidopsis thaliana (Mouse-ear cress), this protein is Nucleobase-ascorbate transporter 2 (NAT2).